Here is a 141-residue protein sequence, read N- to C-terminus: Mediator of RNA polymerase II transcription subunit 21 (141 aa).

Residues 79–122 (EESSIELQVQALKRLEIENQESAEKLEEVVRKGELLLEKIQAAL) adopt a coiled-coil conformation.

Belongs to the Mediator complex subunit 21 family. In terms of assembly, component of the Mediator complex.

Its subcellular location is the nucleus. Its function is as follows. Component of the Mediator complex, a coactivator involved in the regulated transcription of nearly all RNA polymerase II-dependent genes. Mediator functions as a bridge to convey information from gene-specific regulatory proteins to the basal RNA polymerase II transcription machinery. Mediator is recruited to promoters by direct interactions with regulatory proteins and serves as a scaffold for the assembly of a functional preinitiation complex with RNA polymerase II and the general transcription factors. This Aedes aegypti (Yellowfever mosquito) protein is Mediator of RNA polymerase II transcription subunit 21 (MED21).